The primary structure comprises 546 residues: T-complex protein 1 subunit epsilon (546 aa).

Belongs to the TCP-1 chaperonin family. Heterooligomeric complex of about 850 to 900 kDa that forms two stacked rings, 12 to 16 nm in diameter.

It is found in the cytoplasm. Its function is as follows. Molecular chaperone; assists the folding of proteins upon ATP hydrolysis. Known to play a role, in vitro, in the folding of actin and tubulin. This is T-complex protein 1 subunit epsilon (cct5) from Schizosaccharomyces pombe (strain 972 / ATCC 24843) (Fission yeast).